The sequence spans 423 residues: ER-bound oxygenase mpaB' (423 aa).

The Lumenal portion of the chain corresponds to 1-22 (MSLSLPPALSELARALPYSRTQ). A helical membrane pass occupies residues 23–41 (WLPILVGFLIGYPLLIKAL). At 42–423 (RYKRLGEMKK…ISRTGKCPFH (382 aa)) the chain is on the cytoplasmic side.

This sequence belongs to the mpaB oxygenase family.

Its subcellular location is the endoplasmic reticulum membrane. It catalyses the reaction 4-farnesyl-3,5-dihydroxy-6-methylphthalide + AH2 + 2 O2 = (4E,8E)-10-(4,6-dihydroxy-7-methyl-3-oxo-1,3-dihydro-2-benzofuran-5-yl)-4,8-dimethyldeca-4,8-dienoate + acetone + A + H2O + H(+). It functions in the pathway secondary metabolite biosynthesis; terpenoid biosynthesis. ER-bound oxygenase; part of the gene cluster that mediates the biosynthesis of mycophenolic acid (MPA), the first isolated antibiotic natural product in the world obtained from a culture of Penicillium brevicompactum in 1893. MpaB' catalyzes the oxidative cleavage the C19-C20 double bond in farnesyl-DHMP (FDHMP) to yield FDHMP-3C via a mycophenolic aldehyde intermediate. The first step of the pathway is the synthesis of 5-methylorsellinic acid (5MOA) by the cytosolic polyketide synthase mpaC. 5MOA is then converted to the phthalide compound 5,7-dihydroxy-4,6-dimethylphthalide (DHMP) by the endoplasmic reticulum-bound cytochrome P450 monooxygenase mpaDE. MpaDE first catalyzes hydroxylation of 5-MOA to 4,6-dihydroxy-2-(hydroxymethyl)-3-methylbenzoic acid (DHMB). MpaDE then acts as a lactone synthase that catalyzes the ring closure to convert DHMB into DHMP. The next step is the prenylation of DHMP by the Golgi apparatus-associated prenyltransferase mpaA to yield farnesyl-DHMP (FDHMP). The ER-bound oxygenase mpaB then mediates the oxidative cleavage the C19-C20 double bond in FDHMP to yield FDHMP-3C via a mycophenolic aldehyde intermediate. The O-methyltransferase mpaG catalyzes the methylation of FDHMP-3C to yield MFDHMP-3C. After the cytosolic methylation of FDHMP-3C, MFDHMP-3C enters into peroxisomes probably via free diffusion due to its low molecular weight. Upon a peroxisomal CoA ligation reaction, catalyzed by a beta-oxidation component enzyme acyl-CoA ligase ACL891, MFDHMP-3C-CoA would then be restricted to peroxisomes for the following beta-oxidation pathway steps. The peroxisomal beta-oxidation machinery than converts MFDHMP-3C-CoA into MPA_CoA, via a beta-oxidation chain-shortening process. Finally mpaH acts as a peroxisomal acyl-CoA hydrolase with high substrate specificity toward MPA-CoA to release the final product MPA. The protein is ER-bound oxygenase mpaB' of Penicillium brevicompactum.